A 114-amino-acid chain; its full sequence is Ribosome-binding factor A (114 aa).

The protein belongs to the RbfA family. In terms of assembly, monomer. Binds 30S ribosomal subunits, but not 50S ribosomal subunits or 70S ribosomes.

The protein localises to the cytoplasm. In terms of biological role, one of several proteins that assist in the late maturation steps of the functional core of the 30S ribosomal subunit. Associates with free 30S ribosomal subunits (but not with 30S subunits that are part of 70S ribosomes or polysomes). Required for efficient processing of 16S rRNA. May interact with the 5'-terminal helix region of 16S rRNA. This Listeria welshimeri serovar 6b (strain ATCC 35897 / DSM 20650 / CCUG 15529 / CIP 8149 / NCTC 11857 / SLCC 5334 / V8) protein is Ribosome-binding factor A.